A 469-amino-acid polypeptide reads, in one-letter code: ATP synthase subunit beta (469 aa).

156–163 (GGAGVGKT) is a binding site for ATP.

This sequence belongs to the ATPase alpha/beta chains family. As to quaternary structure, F-type ATPases have 2 components, CF(1) - the catalytic core - and CF(0) - the membrane proton channel. CF(1) has five subunits: alpha(3), beta(3), gamma(1), delta(1), epsilon(1). CF(0) has three main subunits: a(1), b(2) and c(9-12). The alpha and beta chains form an alternating ring which encloses part of the gamma chain. CF(1) is attached to CF(0) by a central stalk formed by the gamma and epsilon chains, while a peripheral stalk is formed by the delta and b chains.

The protein resides in the cell membrane. The enzyme catalyses ATP + H2O + 4 H(+)(in) = ADP + phosphate + 5 H(+)(out). In terms of biological role, produces ATP from ADP in the presence of a proton gradient across the membrane. The catalytic sites are hosted primarily by the beta subunits. This Lactococcus lactis subsp. cremoris (strain SK11) protein is ATP synthase subunit beta.